Here is a 434-residue protein sequence, read N- to C-terminus: MFS-type transporter AFUA_1G00970 (434 aa).

A run of 12 helical transmembrane segments spans residues valine 21–phenylalanine 41, tryptophan 60–valine 80, valine 87–serine 107, isoleucine 112–phenylalanine 132, leucine 145–isoleucine 165, valine 182–proline 202, valine 240–phenylalanine 260, tyrosine 278–alanine 298, valine 301–tryptophan 321, leucine 327–leucine 347, alanine 364–glycine 384, and leucine 393–alanine 413. Residues proline 201 to threonine 225 form a disordered region.

This sequence belongs to the major facilitator superfamily. Monocarboxylate porter (TC 2.A.1.13) family.

It is found in the cell membrane. In terms of biological role, MFS-type transporter; part of the gene cluster that mediates the biosynthesis of fumigermin that inhibits germination of spores of the inducing S.rapamycinicus, and thus helps the fungus to defend resources in the shared habitat against a bacterial competitor. May be involved in the secretion of fumigermin. The chain is MFS-type transporter AFUA_1G00970 from Aspergillus fumigatus (strain ATCC MYA-4609 / CBS 101355 / FGSC A1100 / Af293) (Neosartorya fumigata).